Here is a 395-residue protein sequence, read N- to C-terminus: S-adenosylmethionine synthase (395 aa).

ATP is bound at residue histidine 16. Aspartate 18 is a Mg(2+) binding site. Glutamate 44 contributes to the K(+) binding site. L-methionine contacts are provided by glutamate 57 and glutamine 100. Positions 100 to 110 are flexible loop; sequence QSTDIAQGVNE. ATP contacts are provided by residues 174–176, 241–242, aspartate 250, 256–257, alanine 273, and lysine 277; these read DAK, RF, and RK. Residue aspartate 250 coordinates L-methionine. Residue lysine 281 coordinates L-methionine.

It belongs to the AdoMet synthase family. As to quaternary structure, homotetramer; dimer of dimers. Mg(2+) serves as cofactor. Requires K(+) as cofactor.

It is found in the cytoplasm. It catalyses the reaction L-methionine + ATP + H2O = S-adenosyl-L-methionine + phosphate + diphosphate. The protein operates within amino-acid biosynthesis; S-adenosyl-L-methionine biosynthesis; S-adenosyl-L-methionine from L-methionine: step 1/1. Catalyzes the formation of S-adenosylmethionine (AdoMet) from methionine and ATP. The overall synthetic reaction is composed of two sequential steps, AdoMet formation and the subsequent tripolyphosphate hydrolysis which occurs prior to release of AdoMet from the enzyme. The sequence is that of S-adenosylmethionine synthase from Streptococcus uberis (strain ATCC BAA-854 / 0140J).